A 414-amino-acid polypeptide reads, in one-letter code: UPF0754 membrane protein tlr2287 (414 aa).

2 consecutive transmembrane segments (helical) span residues 2 to 22 (ADISYWTLLVPPLAGGVIGYF) and 386 to 406 (AIVRLGGILGFLIGVVQAGVL).

This sequence belongs to the UPF0754 family.

It localises to the cell inner membrane. This is UPF0754 membrane protein tlr2287 from Thermosynechococcus vestitus (strain NIES-2133 / IAM M-273 / BP-1).